A 130-amino-acid polypeptide reads, in one-letter code: Small ribosomal subunit protein uS11 (130 aa).

Belongs to the universal ribosomal protein uS11 family. In terms of assembly, part of the 30S ribosomal subunit. Interacts with proteins S7 and S18. Binds to IF-3.

Functionally, located on the platform of the 30S subunit, it bridges several disparate RNA helices of the 16S rRNA. Forms part of the Shine-Dalgarno cleft in the 70S ribosome. This is Small ribosomal subunit protein uS11 from Bdellovibrio bacteriovorus (strain ATCC 15356 / DSM 50701 / NCIMB 9529 / HD100).